The chain runs to 497 residues: UPF0371 protein DIP2346 (497 aa).

Belongs to the UPF0371 family.

In Corynebacterium diphtheriae (strain ATCC 700971 / NCTC 13129 / Biotype gravis), this protein is UPF0371 protein DIP2346.